Consider the following 143-residue polypeptide: Large ribosomal subunit protein uL11 (143 aa).

It belongs to the universal ribosomal protein uL11 family. Part of the ribosomal stalk of the 50S ribosomal subunit. Interacts with L10 and the large rRNA to form the base of the stalk. L10 forms an elongated spine to which L12 dimers bind in a sequential fashion forming a multimeric L10(L12)X complex. Post-translationally, one or more lysine residues are methylated.

Forms part of the ribosomal stalk which helps the ribosome interact with GTP-bound translation factors. The polypeptide is Large ribosomal subunit protein uL11 (Clavibacter sepedonicus (Clavibacter michiganensis subsp. sepedonicus)).